The primary structure comprises 221 residues: Large ribosomal subunit protein uL4 (221 aa).

Residues 48-77 (TASTKTRGEVSGGGRKPWIQKHTGRARQGS) are disordered.

This sequence belongs to the universal ribosomal protein uL4 family. In terms of assembly, part of the 50S ribosomal subunit.

One of the primary rRNA binding proteins, this protein initially binds near the 5'-end of the 23S rRNA. It is important during the early stages of 50S assembly. It makes multiple contacts with different domains of the 23S rRNA in the assembled 50S subunit and ribosome. Functionally, forms part of the polypeptide exit tunnel. The polypeptide is Large ribosomal subunit protein uL4 (Thermosipho africanus (strain TCF52B)).